The following is a 137-amino-acid chain: Large ribosomal subunit protein uL16 (137 aa).

It belongs to the universal ribosomal protein uL16 family. In terms of assembly, part of the 50S ribosomal subunit.

In terms of biological role, binds 23S rRNA and is also seen to make contacts with the A and possibly P site tRNAs. The sequence is that of Large ribosomal subunit protein uL16 from Ruegeria pomeroyi (strain ATCC 700808 / DSM 15171 / DSS-3) (Silicibacter pomeroyi).